We begin with the raw amino-acid sequence, 669 residues long: MSKEIAKKRIEELRDLLNTFNYQYHVLDNPSVSDAEYDRNMQELIKLEAENPEFMSEDSPSVRVGGTVLDIFEKVTHKSPMLSLGNAFNEGDLRDFDRRVRQGIDGANVRYICELKIDGLAVSLHYEKGRFIQGATRGDGVTGEDITQNLKTIKAIPLRLNEEVTLEARGEAYMPKRSFVKLNEEKEQNGEDVFANPRNAAAGSIRQLDPKIAAKRNLSMFVYGLANVEEKTIPSHSESLDFLGELGFKTNPNRRTCETIEEVIAYVEEWQEKRPHLDYEIDGIVIKVDDVALQESLGTTAKSPRWAIAYKFPAEEVVTRLTGIELSVGRTGVVTPTAELEPVRVAGTIVRRASLHNEDLIREKDIRIGDYVVVKKAGDIIPEVVNVIFDKRTGEEEEYRMPTHCPACESELVRLEEEVALRCINPTCPAQIREGLIHFVSRNAMNIDGLGERVITQLFDADYIRTFADLYALTKEQLLQLERFGEKSATNLIQAIENSKENSLERLLFGLGIRHVGAKAARTFAEHFETMDELVKATEEELKAINEIGEKMAQSVVTYFDNEDVLELLQQFKEYGVNMTYKGIKIADLQNVESYFAGKTVVLTGKLEVMGRSEAKKKIEALGGKVTGSVSKSTDLVVAGEAAGSKLAQAEKHNVEVWNEERFLQELNK.

Residues 34–38 (DAEYD), 83–84 (SL), and Glu114 contribute to the NAD(+) site. Lys116 functions as the N6-AMP-lysine intermediate in the catalytic mechanism. Residues Arg137, Glu171, Lys287, and Lys311 each contribute to the NAD(+) site. The Zn(2+) site is built by Cys405, Cys408, Cys423, and Cys428. Residues 591 to 669 (NVESYFAGKT…EERFLQELNK (79 aa)) form the BRCT domain.

Belongs to the NAD-dependent DNA ligase family. LigA subfamily. The cofactor is Mg(2+). Requires Mn(2+) as cofactor.

The catalysed reaction is NAD(+) + (deoxyribonucleotide)n-3'-hydroxyl + 5'-phospho-(deoxyribonucleotide)m = (deoxyribonucleotide)n+m + AMP + beta-nicotinamide D-nucleotide.. DNA ligase that catalyzes the formation of phosphodiester linkages between 5'-phosphoryl and 3'-hydroxyl groups in double-stranded DNA using NAD as a coenzyme and as the energy source for the reaction. It is essential for DNA replication and repair of damaged DNA. This Bacillus cereus (strain ATCC 14579 / DSM 31 / CCUG 7414 / JCM 2152 / NBRC 15305 / NCIMB 9373 / NCTC 2599 / NRRL B-3711) protein is DNA ligase.